The following is a 264-amino-acid chain: Thymidylate synthase (264 aa).

Arg-21 provides a ligand contact to dUMP. His-51 is a (6R)-5,10-methylene-5,6,7,8-tetrahydrofolate binding site. 126–127 contributes to the dUMP binding site; it reads RR. Cys-146 acts as the Nucleophile in catalysis. DUMP-binding positions include 166–169, Asn-177, and 207–209; these read RSCD and HLY. Asp-169 provides a ligand contact to (6R)-5,10-methylene-5,6,7,8-tetrahydrofolate. Position 263 (Ala-263) interacts with (6R)-5,10-methylene-5,6,7,8-tetrahydrofolate.

It belongs to the thymidylate synthase family. Bacterial-type ThyA subfamily. As to quaternary structure, homodimer.

It localises to the cytoplasm. The catalysed reaction is dUMP + (6R)-5,10-methylene-5,6,7,8-tetrahydrofolate = 7,8-dihydrofolate + dTMP. It participates in pyrimidine metabolism; dTTP biosynthesis. Its function is as follows. Catalyzes the reductive methylation of 2'-deoxyuridine-5'-monophosphate (dUMP) to 2'-deoxythymidine-5'-monophosphate (dTMP) while utilizing 5,10-methylenetetrahydrofolate (mTHF) as the methyl donor and reductant in the reaction, yielding dihydrofolate (DHF) as a by-product. This enzymatic reaction provides an intracellular de novo source of dTMP, an essential precursor for DNA biosynthesis. This is Thymidylate synthase from Escherichia coli O9:H4 (strain HS).